A 178-amino-acid polypeptide reads, in one-letter code: Ras-like protein (178 aa).

A GTP-binding site is contributed by 1–6 (GGVGKS). Positions 21–29 (YDPTIEDSY) match the Effector region motif. GTP contacts are provided by residues 46 to 50 (DTAGQ) and 105 to 108 (NKCD). Cysteine 175 carries the post-translational modification Cysteine methyl ester. Cysteine 175 is lipidated: S-geranylgeranyl cysteine. Residues 176–178 (SIL) constitute a propeptide, removed in mature form.

The protein belongs to the small GTPase superfamily. Ras family.

The protein resides in the cell membrane. The enzyme catalyses GTP + H2O = GDP + phosphate + H(+). With respect to regulation, alternates between an inactive form bound to GDP and an active form bound to GTP. Activated by a guanine nucleotide-exchange factor (GEF) and inactivated by a GTPase-activating protein (GAP). In terms of biological role, ras proteins bind GDP/GTP and possess intrinsic GTPase activity. In Artemia salina (Brine shrimp), this protein is Ras-like protein.